The primary structure comprises 414 residues: Acyltransferase MYCGRDRAFT_85486 (414 aa).

Polar residues predominate over residues 16-25 (DGTSTVTIRP). Residues 16-47 (DGTSTVTIRPTQKAAPSEEPSQDTAPSKKDSN) are disordered. His-329 lines the substrate pocket. Glu-367 serves as the catalytic Proton acceptor.

The protein belongs to the lysine N-acyltransferase mbtK family.

Its pathway is siderophore biosynthesis. Acyltransferase; part of the gene cluster 14 that mediates the biosynthesis of a ferrichrome A-like siderophore which may contribute to organismal virulence. The first step of siderophore biosynthesis is performed by the HMG-CoA synthase (HMGS) MYCGRDRAFT_54740 which catalyzes the generation of HMG-CoA and CoA using acetoacetyl-CoA and acetyl-CoA as substrates. The enoyl-CoA isomerase/hydratase MYCGRDRAFT_76805 then catalyzes the conversion of HMG-CoA to methylglutaconyl-CoA. The acyltransferase MYCGRDRAFT_85486 then fuses methylglutaconyl-CoA with hydroxyornithine to yield methylglutaconyl hydroxyornithine. Methylglutaconyl hydroxyornithine is then available for use by the nonribosomal peptide synthetase NRPS2 to generate the ferrichrome A-like siderophore. In Zymoseptoria tritici (strain CBS 115943 / IPO323) (Speckled leaf blotch fungus), this protein is Acyltransferase MYCGRDRAFT_85486.